The primary structure comprises 264 residues: 3-methyl-2-oxobutanoate hydroxymethyltransferase (264 aa).

Positions 45 and 84 each coordinate Mg(2+). Residues 45–46 (DS), D84, and K112 contribute to the 3-methyl-2-oxobutanoate site. Mg(2+) is bound at residue E114. E181 acts as the Proton acceptor in catalysis.

It belongs to the PanB family. In terms of assembly, homodecamer; pentamer of dimers. It depends on Mg(2+) as a cofactor.

It is found in the cytoplasm. It carries out the reaction 3-methyl-2-oxobutanoate + (6R)-5,10-methylene-5,6,7,8-tetrahydrofolate + H2O = 2-dehydropantoate + (6S)-5,6,7,8-tetrahydrofolate. Its pathway is cofactor biosynthesis; (R)-pantothenate biosynthesis; (R)-pantoate from 3-methyl-2-oxobutanoate: step 1/2. Functionally, catalyzes the reversible reaction in which hydroxymethyl group from 5,10-methylenetetrahydrofolate is transferred onto alpha-ketoisovalerate to form ketopantoate. The polypeptide is 3-methyl-2-oxobutanoate hydroxymethyltransferase (Shewanella piezotolerans (strain WP3 / JCM 13877)).